A 654-amino-acid chain; its full sequence is 4-hydroxy-3-methylbut-2-en-1-yl diphosphate synthase (flavodoxin) (654 aa).

Residues Cys557, Cys560, Cys591, and Glu598 each contribute to the [4Fe-4S] cluster site.

This sequence belongs to the IspG family. [4Fe-4S] cluster is required as a cofactor.

The enzyme catalyses (2E)-4-hydroxy-3-methylbut-2-enyl diphosphate + oxidized [flavodoxin] + H2O + 2 H(+) = 2-C-methyl-D-erythritol 2,4-cyclic diphosphate + reduced [flavodoxin]. Its pathway is isoprenoid biosynthesis; isopentenyl diphosphate biosynthesis via DXP pathway; isopentenyl diphosphate from 1-deoxy-D-xylulose 5-phosphate: step 5/6. Its function is as follows. Converts 2C-methyl-D-erythritol 2,4-cyclodiphosphate (ME-2,4cPP) into 1-hydroxy-2-methyl-2-(E)-butenyl 4-diphosphate. This chain is 4-hydroxy-3-methylbut-2-en-1-yl diphosphate synthase (flavodoxin), found in Protochlamydia amoebophila (strain UWE25).